A 345-amino-acid chain; its full sequence is Eukaryotic translation initiation factor 3 subunit F (345 aa).

The MPN domain maps to 30 to 166 (VVIQPQAIFS…TRAYISAPVG (137 aa)). Residues 310-345 (EGASAEAGAQRGQRGGKGGRGGQQRTQERASEEVRA) form a disordered region. The segment covering 312-321 (ASAEAGAQRG) has biased composition (low complexity). The span at 322 to 331 (QRGGKGGRGG) shows a compositional bias: gly residues. The span at 335-345 (TQERASEEVRA) shows a compositional bias: basic and acidic residues.

It belongs to the eIF-3 subunit F family. As to quaternary structure, component of the eukaryotic translation initiation factor 3 (eIF-3) complex.

The protein localises to the cytoplasm. Functionally, component of the eukaryotic translation initiation factor 3 (eIF-3) complex, which is involved in protein synthesis of a specialized repertoire of mRNAs and, together with other initiation factors, stimulates binding of mRNA and methionyl-tRNAi to the 40S ribosome. The eIF-3 complex specifically targets and initiates translation of a subset of mRNAs involved in cell proliferation. The polypeptide is Eukaryotic translation initiation factor 3 subunit F (Aspergillus fumigatus (strain CBS 144.89 / FGSC A1163 / CEA10) (Neosartorya fumigata)).